The primary structure comprises 271 residues: Enolase-phosphatase E1 (271 aa).

Residues Asp18 and Glu20 each coordinate Mg(2+). Substrate-binding positions include 144 to 145 and Lys194; that span reads SS. Asp221 provides a ligand contact to Mg(2+).

The protein belongs to the HAD-like hydrolase superfamily. MasA/MtnC family. Monomer. Mg(2+) serves as cofactor.

It is found in the cytoplasm. Its subcellular location is the nucleus. The catalysed reaction is 5-methylsulfanyl-2,3-dioxopentyl phosphate + H2O = 1,2-dihydroxy-5-(methylsulfanyl)pent-1-en-3-one + phosphate. It participates in amino-acid biosynthesis; L-methionine biosynthesis via salvage pathway; L-methionine from S-methyl-5-thio-alpha-D-ribose 1-phosphate: step 3/6. The protein operates within amino-acid biosynthesis; L-methionine biosynthesis via salvage pathway; L-methionine from S-methyl-5-thio-alpha-D-ribose 1-phosphate: step 4/6. Its function is as follows. Bifunctional enzyme that catalyzes the enolization of 2,3-diketo-5-methylthiopentyl-1-phosphate (DK-MTP-1-P) into the intermediate 2-hydroxy-3-keto-5-methylthiopentenyl-1-phosphate (HK-MTPenyl-1-P), which is then dephosphorylated to form the acireductone 1,2-dihydroxy-3-keto-5-methylthiopentene (DHK-MTPene). This chain is Enolase-phosphatase E1, found in Candida albicans (strain WO-1) (Yeast).